The primary structure comprises 294 residues: Antiviral protein alpha (294 aa).

The N-terminal stretch at 1-24 is a signal peptide; the sequence is MKMMVVVVVMMLSWLILKPPSTWA. 2 cysteine pairs are disulfide-bonded: Cys58-Cys282 and Cys108-Cys130. Glu199 is an active-site residue. The propeptide occupies 286 to 294; it reads YQSAMFPHL.

Belongs to the ribosome-inactivating protein family. Type 1 RIP subfamily. In terms of assembly, monomer.

The protein localises to the secreted. It localises to the cell wall. The enzyme catalyses Endohydrolysis of the N-glycosidic bond at one specific adenosine on the 28S rRNA.. Its function is as follows. Inhibits viral infection of plants, and protein synthesis in vitro. Has also been shown to inhibit the replication of mammalian viruses. The protein may provide a means of cellular suicide upon invasion by a virus. The protein is Antiviral protein alpha of Phytolacca americana (American pokeweed).